The primary structure comprises 557 residues: Membrane protein insertase YidC (557 aa).

Residues 1–21 (MNWLRNSLIAAILVITYVLFI) form a helical membrane-spanning segment. Positions 52 to 71 (SDDAVASSATEESDVPEVSV) are disordered. The next 5 helical transmembrane spans lie at 346–366 (TIDYSFLWFIAKPLFFALDFI), 369–389 (LVGNWGVAIILLTVLIKAVFF), 439–459 (FGGCLPILLQMPVFISLYWMI), 470–490 (FFLWIQDLSVKDPLFILPLLM), and 517–537 (PIGFTFLFMFFPAGLVLYWVV).

It belongs to the OXA1/ALB3/YidC family. Type 1 subfamily. As to quaternary structure, interacts with the Sec translocase complex via SecD. Specifically interacts with transmembrane segments of nascent integral membrane proteins during membrane integration.

The protein resides in the cell inner membrane. Its function is as follows. Required for the insertion and/or proper folding and/or complex formation of integral membrane proteins into the membrane. Involved in integration of membrane proteins that insert both dependently and independently of the Sec translocase complex, as well as at least some lipoproteins. Aids folding of multispanning membrane proteins. The chain is Membrane protein insertase YidC from Saccharophagus degradans (strain 2-40 / ATCC 43961 / DSM 17024).